The primary structure comprises 66 residues: Small ribosomal subunit protein bS21B (66 aa).

Residues Y38–Y66 are disordered.

It belongs to the bacterial ribosomal protein bS21 family.

This Francisella tularensis subsp. tularensis (strain SCHU S4 / Schu 4) protein is Small ribosomal subunit protein bS21B.